Here is a 697-residue protein sequence, read N- to C-terminus: Elongation factor G (697 aa).

The 275-residue stretch at 8 to 282 (ENTRNIGIMA…AIVDYMPSPV (275 aa)) folds into the tr-type G domain. Residues 17–24 (AHIDAGKT), 81–85 (DTPGH), and 135–138 (NKMD) each bind GTP.

The protein belongs to the TRAFAC class translation factor GTPase superfamily. Classic translation factor GTPase family. EF-G/EF-2 subfamily.

The protein resides in the cytoplasm. Catalyzes the GTP-dependent ribosomal translocation step during translation elongation. During this step, the ribosome changes from the pre-translocational (PRE) to the post-translocational (POST) state as the newly formed A-site-bound peptidyl-tRNA and P-site-bound deacylated tRNA move to the P and E sites, respectively. Catalyzes the coordinated movement of the two tRNA molecules, the mRNA and conformational changes in the ribosome. The chain is Elongation factor G from Acetivibrio thermocellus (strain ATCC 27405 / DSM 1237 / JCM 9322 / NBRC 103400 / NCIMB 10682 / NRRL B-4536 / VPI 7372) (Clostridium thermocellum).